The following is a 910-amino-acid chain: DNA mismatch repair protein MutS (910 aa).

658–665 is an ATP binding site; the sequence is GPNMGGKS.

The protein belongs to the DNA mismatch repair MutS family.

This protein is involved in the repair of mismatches in DNA. It is possible that it carries out the mismatch recognition step. This protein has a weak ATPase activity. This chain is DNA mismatch repair protein MutS, found in Brucella anthropi (strain ATCC 49188 / DSM 6882 / CCUG 24695 / JCM 21032 / LMG 3331 / NBRC 15819 / NCTC 12168 / Alc 37) (Ochrobactrum anthropi).